The sequence spans 465 residues: ATP-dependent rRNA helicase rrp3 (465 aa).

Basic and acidic residues predominate over residues 1-22 (MAPSEKKLTEDKKNSSLNKKIE). The tract at residues 1–44 (MAPSEKKLTEDKKNSSLNKKIETSNSSSEKSSENNNGDSQNNEA) is disordered. Residues 23 to 36 (TSNSSSEKSSENNN) are compositionally biased toward low complexity. The Q motif signature appears at 46-74 (KTFKELGVIDELCEACEKLGFKTPTPIQQ). The region spanning 77 to 248 (IPVVLNKRDV…RASLHQPVRV (172 aa)) is the Helicase ATP-binding domain. An ATP-binding site is contributed by 90 to 97 (AQTGSGKT). The short motif at 196-199 (DEAD) is the DEAD box element. Residues 275 to 419 (YLVYLVNELA…EYEIDKEGVF (145 aa)) form the Helicase C-terminal domain. Residues 442-453 (RRKSKGKLHTKR) show a composition bias toward basic residues. The interval 442-465 (RRKSKGKLHTKRKRDDLDREEQIY) is disordered. Positions 454–465 (KRDDLDREEQIY) are enriched in basic and acidic residues.

This sequence belongs to the DEAD box helicase family. DDX47/RRP3 subfamily. In terms of assembly, interacts with the SSU processome.

The protein localises to the nucleus. It catalyses the reaction ATP + H2O = ADP + phosphate + H(+). In terms of biological role, ATP-dependent rRNA helicase required for pre-ribosomal RNA processing. Involved in the maturation of the 35S-pre-rRNA and to its cleavage to mature 18S rRNA. This Schizosaccharomyces pombe (strain 972 / ATCC 24843) (Fission yeast) protein is ATP-dependent rRNA helicase rrp3.